We begin with the raw amino-acid sequence, 111 residues long: UPF0145 protein Bphy_3680 (111 aa).

This sequence belongs to the UPF0145 family.

This chain is UPF0145 protein Bphy_3680, found in Paraburkholderia phymatum (strain DSM 17167 / CIP 108236 / LMG 21445 / STM815) (Burkholderia phymatum).